Consider the following 315-residue polypeptide: Pantothenate kinase (315 aa).

ATP is bound at residue 94–101 (GSVAVGKS).

Belongs to the prokaryotic pantothenate kinase family.

The protein resides in the cytoplasm. It carries out the reaction (R)-pantothenate + ATP = (R)-4'-phosphopantothenate + ADP + H(+). The protein operates within cofactor biosynthesis; coenzyme A biosynthesis; CoA from (R)-pantothenate: step 1/5. The chain is Pantothenate kinase from Shewanella amazonensis (strain ATCC BAA-1098 / SB2B).